Here is a 289-residue protein sequence, read N- to C-terminus: Pantothenate synthetase (289 aa).

ATP is bound at residue 30-37 (MGNLHEGH). Residue His-37 is the Proton donor of the active site. A (R)-pantoate-binding site is contributed by Gln-61. Gln-61 lines the beta-alanine pocket. 149 to 152 (GEKD) contributes to the ATP binding site. Gln-155 contacts (R)-pantoate. 186–189 (MSSR) is an ATP binding site.

The protein belongs to the pantothenate synthetase family. In terms of assembly, homodimer.

It is found in the cytoplasm. The catalysed reaction is (R)-pantoate + beta-alanine + ATP = (R)-pantothenate + AMP + diphosphate + H(+). It participates in cofactor biosynthesis; (R)-pantothenate biosynthesis; (R)-pantothenate from (R)-pantoate and beta-alanine: step 1/1. Catalyzes the condensation of pantoate with beta-alanine in an ATP-dependent reaction via a pantoyl-adenylate intermediate. The protein is Pantothenate synthetase of Psychromonas ingrahamii (strain DSM 17664 / CCUG 51855 / 37).